The following is a 176-amino-acid chain: Oleosin Ara h 14.0101 (176 aa).

Ala-2 bears the N-acetylalanine; alternate mark. A run of 2 helical transmembrane segments spans residues 50-80 (IIAV…GLAI) and 95-117 (AVVT…LTGL). The segment at 157–176 (TKDAGQQIQTKAQDVKRSSS) is disordered.

Belongs to the oleosin family. As to quaternary structure, homodimer. Forms oligomers. In terms of tissue distribution, expressed in seeds (at protein level). Not expressed in leaves.

Its subcellular location is the lipid droplet. It localises to the membrane. May have a structural role to stabilize the lipid body during desiccation of the seed by preventing coalescence of the oil. Probably interacts with both lipid and phospholipid moieties of lipid bodies. May also provide recognition signals for specific lipase anchorage in lipolysis during seedling growth. This is Oleosin Ara h 14.0101 from Arachis hypogaea (Peanut).